A 175-amino-acid polypeptide reads, in one-letter code: Adenine phosphoribosyltransferase (175 aa).

The protein belongs to the purine/pyrimidine phosphoribosyltransferase family. Homodimer.

It is found in the cytoplasm. The enzyme catalyses AMP + diphosphate = 5-phospho-alpha-D-ribose 1-diphosphate + adenine. Its pathway is purine metabolism; AMP biosynthesis via salvage pathway; AMP from adenine: step 1/1. Catalyzes a salvage reaction resulting in the formation of AMP, that is energically less costly than de novo synthesis. In Synechococcus sp. (strain CC9902), this protein is Adenine phosphoribosyltransferase.